The sequence spans 95 residues: Citrate lyase acyl carrier protein (95 aa).

An O-(phosphoribosyl dephospho-coenzyme A)serine modification is found at S14.

It belongs to the CitD family. As to quaternary structure, oligomer with a subunit composition of (alpha,beta,gamma)6.

It localises to the cytoplasm. Functionally, covalent carrier of the coenzyme of citrate lyase. The sequence is that of Citrate lyase acyl carrier protein from Haemophilus influenzae (strain ATCC 51907 / DSM 11121 / KW20 / Rd).